We begin with the raw amino-acid sequence, 487 residues long: Homoserine O-acetyltransferase (487 aa).

The 308-residue stretch at 45 to 352 (NVILVCHPLT…PHGHDGFLLE (308 aa)) folds into the AB hydrolase-1 domain. S150 serves as the catalytic Nucleophile. Residue R219 coordinates substrate. Residues D313 and H346 contribute to the active site. D347 contacts substrate. CBS domains follow at residues 373-430 (MTNN…FQDL) and 434-487 (MTKD…EVLQ).

This sequence belongs to the AB hydrolase superfamily. MetX family. Homodimer.

Its subcellular location is the cytoplasm. The catalysed reaction is L-homoserine + acetyl-CoA = O-acetyl-L-homoserine + CoA. It participates in amino-acid biosynthesis; L-methionine biosynthesis via de novo pathway; O-acetyl-L-homoserine from L-homoserine: step 1/1. Its function is as follows. Transfers an acetyl group from acetyl-CoA to L-homoserine, forming acetyl-L-homoserine. This is Homoserine O-acetyltransferase from Methanocorpusculum labreanum (strain ATCC 43576 / DSM 4855 / Z).